Reading from the N-terminus, the 348-residue chain is WRKY transcription factor WRKY71 (348 aa).

Residues 50 to 84 (VAALEAELKRMGAENRQLSEMLAAVAAKYEALQSQ) are a coiled coil. Disordered stretches follow at residues 91 to 141 (ASAN…APHH) and 246 to 287 (GEHN…APVV). Residues 102-114 (NQSSTSEGGSVSP) are compositionally biased toward low complexity. The short motif at 116–122 (RKRKSES) is the Nuclear localization signal element. A compositionally biased stretch (pro residues) spans 126-136 (SPPPPPPPHPH). A DNA-binding region (WRKY) is located at residues 187–253 (DLSLVVKDGY…YEGEHNHGQP (67 aa)). Residues 267–348 (SGKSAGKPPH…RILELSPTKD (82 aa)) form a transcription repression of gibberellic acid (GA)-induced promoters region. Positions 275–286 (PHAPAAAPPAPV) are enriched in pro residues.

It belongs to the WRKY group II-a family. In terms of assembly, interacts with WRKY51; this interaction promotes W box binding of the complex WRKY51/WRKY71 in a zinc ion-dependent manner. As to expression, highly expressed in aleurone cells. In seeds, predominantly present in the plumule, radicle and scutellum of the embryo. Expressed in roots, stems, young leaves and spikelets.

It is found in the nucleus. In terms of biological role, transcription repressor. Interacts specifically with the W box (5'-(T)TGAC[CT]-3'), a frequently occurring elicitor-responsive cis-acting element. Represses specifically gibberellic acid (GA)-induced promoters in aleurone cells, probably by interfering with GAM1. Regulates, probably indirectly, the activation of defense-related genes such as GF14E during defense response. Modulates plant innate immunity against X.oryzae pv. oryzae (Xoo). Confers resistance to the virulent bacterial pathogen X.oryzae pv. oryzae (Xoo) 13751, probably via the regulation of NPR1 and PR1b defense signaling pathways. This Oryza sativa subsp. indica (Rice) protein is WRKY transcription factor WRKY71.